Consider the following 133-residue polypeptide: Small ribosomal subunit protein uS8 (133 aa).

This sequence belongs to the universal ribosomal protein uS8 family. As to quaternary structure, part of the 30S ribosomal subunit. Contacts proteins S5 and S12.

Its function is as follows. One of the primary rRNA binding proteins, it binds directly to 16S rRNA central domain where it helps coordinate assembly of the platform of the 30S subunit. The chain is Small ribosomal subunit protein uS8 from Mycoplasma mobile (strain ATCC 43663 / 163K / NCTC 11711) (Mesomycoplasma mobile).